Here is a 61-residue protein sequence, read N- to C-terminus: Large ribosomal subunit protein uL30 (61 aa).

The protein belongs to the universal ribosomal protein uL30 family. As to quaternary structure, part of the 50S ribosomal subunit.

The sequence is that of Large ribosomal subunit protein uL30 from Caulobacter vibrioides (strain ATCC 19089 / CIP 103742 / CB 15) (Caulobacter crescentus).